Reading from the N-terminus, the 244-residue chain is MGLELYLDLLSQPSRAVYIFAKKNGIPFQLRTVDLLKGQHLSEQFSQVNCLKKVPVLKDGSFVLTESTAILIYLSSKYQVADHWYPADLQARAQVHEYLGWHADNIRGTFGVLLWTKVLGPLIGVQVPEEKVERNRNSMVLALQRLEDKFLRDRAFIAGQQVTLADLMSLEELIQPVALGCNLFEGRPQLTAWRERVEAFLGAELCQEAHNPIMSVLGQAAKKTLPVPPPEAHASMMLRIARIP.

One can recognise a GST N-terminal domain in the interval 2–82 (GLELYLDLLS…YLSSKYQVAD (81 aa)). Residues 40-41 (HL), 53-54 (KV), 66-67 (ES), and 104-107 (DNIR) contribute to the glutathione site. The GST C-terminal domain occupies 88–230 (DLQARAQVHE…AKKTLPVPPP (143 aa)).

Belongs to the GST superfamily. Theta family. Homodimer. In terms of tissue distribution, highest values found in liver followed by testis, adrenal gland, kidney, lung, brain and skeletal muscle. In liver, highest expression found in central vein limiting plate hepatocytes. In lung, expressed mainly in club cells of the bronchiolar epithelium and, at low levels, in type II alveolar cells.

Its subcellular location is the cytoplasm. The protein resides in the cytosol. It is found in the nucleus. It catalyses the reaction RX + glutathione = an S-substituted glutathione + a halide anion + H(+). Catalyzes the inactivation of reactive sulfate esters in carcinogenic arylmethanols. Highest activity towards ethacrynic acid and cumene hydroperoxide. The chain is Glutathione S-transferase theta-2 (Gstt2) from Rattus norvegicus (Rat).